The primary structure comprises 363 residues: Chorismate synthase (363 aa).

Arginine 48 and arginine 54 together coordinate NADP(+). FMN-binding positions include 125–127, 237–238, glycine 277, 292–296, and arginine 318; these read RSS, NA, and KPTSS.

This sequence belongs to the chorismate synthase family. In terms of assembly, homotetramer. Requires FMNH2 as cofactor.

The catalysed reaction is 5-O-(1-carboxyvinyl)-3-phosphoshikimate = chorismate + phosphate. Its pathway is metabolic intermediate biosynthesis; chorismate biosynthesis; chorismate from D-erythrose 4-phosphate and phosphoenolpyruvate: step 7/7. Its function is as follows. Catalyzes the anti-1,4-elimination of the C-3 phosphate and the C-6 proR hydrogen from 5-enolpyruvylshikimate-3-phosphate (EPSP) to yield chorismate, which is the branch point compound that serves as the starting substrate for the three terminal pathways of aromatic amino acid biosynthesis. This reaction introduces a second double bond into the aromatic ring system. This Pseudomonas paraeruginosa (strain DSM 24068 / PA7) (Pseudomonas aeruginosa (strain PA7)) protein is Chorismate synthase.